A 556-amino-acid polypeptide reads, in one-letter code: Oxygen-dependent choline dehydrogenase (556 aa).

Residue 4–33 (DYIIIGAGSAGNVLATRLTEDPNTSVLLLE) coordinates FAD. Catalysis depends on H473, which acts as the Proton acceptor.

The protein belongs to the GMC oxidoreductase family. Requires FAD as cofactor.

The enzyme catalyses choline + A = betaine aldehyde + AH2. It carries out the reaction betaine aldehyde + NAD(+) + H2O = glycine betaine + NADH + 2 H(+). It functions in the pathway amine and polyamine biosynthesis; betaine biosynthesis via choline pathway; betaine aldehyde from choline (cytochrome c reductase route): step 1/1. Functionally, involved in the biosynthesis of the osmoprotectant glycine betaine. Catalyzes the oxidation of choline to betaine aldehyde and betaine aldehyde to glycine betaine at the same rate. The protein is Oxygen-dependent choline dehydrogenase of Shigella flexneri serotype 5b (strain 8401).